The chain runs to 139 residues: Small ribosomal subunit protein bS6 (139 aa).

Residues 114–133 (KKEPREPRAPREPRVEKVDE) show a composition bias toward basic and acidic residues. The interval 114–139 (KKEPREPRAPREPRVEKVDEQTFTEE) is disordered.

It belongs to the bacterial ribosomal protein bS6 family.

Functionally, binds together with bS18 to 16S ribosomal RNA. This is Small ribosomal subunit protein bS6 from Campylobacter concisus (strain 13826).